We begin with the raw amino-acid sequence, 821 residues long: Fibroblast growth factor receptor 2 (821 aa).

The signal sequence occupies residues 1-21 (MVSWGRFICLVLVTMATLSLA). Residues 22–377 (RPSFSLVEDT…EITASPDYLE (356 aa)) lie on the Extracellular side of the membrane. One can recognise an Ig-like C2-type 1 domain in the interval 25–125 (FSLVEDTTLE…ETWIFMVNVT (101 aa)). The cysteines at positions 62 and 107 are disulfide-linked. 2 N-linked (GlcNAc...) asparagine glycosylation sites follow: N83 and N123. The disordered stretch occupies residues 129 to 151 (SSGDDEDDTDSSEDVVSENRSNQ). A compositionally biased stretch (acidic residues) spans 131–144 (GDDEDDTDSSEDVV). N147 is a glycosylation site (N-linked (GlcNAc...) asparagine). 2 Ig-like C2-type domains span residues 154-247 (PYWT…YHLD) and 256-358 (PILQ…AWLT). Positions 161-178 (KMEKRLHACPAANTVKFR) are heparin-binding. A disulfide bond links C179 and C231. Residues N228, N241, N265, N297, N318, and N331 are each glycosylated (N-linked (GlcNAc...) asparagine). C278 and C342 form a disulfide bridge. A helical membrane pass occupies residues 378–398 (IAIYCIGVFLIACMVVTVIFC). At 399–821 (RMKTTTKKPD…YPHINGSVKT (423 aa)) the chain is on the cytoplasmic side. Y466 carries the phosphotyrosine; by autocatalysis modification. A Protein kinase domain is found at 481–770 (LTLGKPLGEG…LTLTTNEEYL (290 aa)). ATP contacts are provided by residues 487-495 (LGEGCFGQV), K517, 565-567 (EYA), and N571. Phosphotyrosine; by autocatalysis occurs at positions 586 and 588. The active-site Proton acceptor is D626. Y656, Y657, and Y769 each carry phosphotyrosine; by autocatalysis. S780 carries the post-translational modification Phosphoserine.

Belongs to the protein kinase superfamily. Tyr protein kinase family. Fibroblast growth factor receptor subfamily. As to quaternary structure, monomer. Homodimer after ligand binding. Interacts predominantly with FGF1 and FGF2, but can also interact with FGF3, FGF4, FGF6, FGF7, FGF8, FGF9, FGF10, FGF17, FGF18 and FGF22 (in vitro). Ligand specificity is determined by tissue-specific expression of isoforms, and differences in the third Ig-like domain are crucial for ligand specificity. Affinity for fibroblast growth factors (FGFs) is increased by heparan sulfate glycosaminoglycans that function as coreceptors. Likewise, KLB increases the affinity for FGF19 and FGF21. Interacts with PLCG1. Interacts with GRB2 and PAK4. Interacts with FLRT2. Post-translationally, autophosphorylated. Binding of FGF family members together with heparan sulfate proteoglycan or heparin promotes receptor dimerization and autophosphorylation on tyrosine residues. Autophosphorylation occurs in trans between the two FGFR molecules present in the dimer. N-glycosylated in the endoplasmic reticulum. The N-glycan chains undergo further maturation to an Endo H-resistant form in the Golgi apparatus. In terms of processing, ubiquitinated. FGFR2 is rapidly ubiquitinated after autophosphorylation, leading to internalization and degradation. Subject to degradation both in lysosomes and by the proteasome.

It localises to the cell membrane. The protein resides in the golgi apparatus. It is found in the cytoplasmic vesicle. The catalysed reaction is L-tyrosyl-[protein] + ATP = O-phospho-L-tyrosyl-[protein] + ADP + H(+). Its activity is regulated as follows. Present in an inactive conformation in the absence of bound ligand. Ligand binding leads to dimerization and activation by autophosphorylation on tyrosine residues. In terms of biological role, tyrosine-protein kinase that acts as a cell-surface receptor for fibroblast growth factors and plays an essential role in the regulation of cell proliferation, differentiation, migration and apoptosis, and in the regulation of embryonic development. Required for normal embryonic patterning, trophoblast function, limb bud development, lung morphogenesis, osteogenesis and skin development. Plays an essential role in the regulation of osteoblast differentiation, proliferation and apoptosis, and is required for normal skeleton development. Promotes cell proliferation in keratinocytes and immature osteoblasts, but promotes apoptosis in differentiated osteoblasts. Phosphorylates PLCG1, FRS2 and PAK4. Ligand binding leads to the activation of several signaling cascades. Activation of PLCG1 leads to the production of the cellular signaling molecules diacylglycerol and inositol 1,4,5-trisphosphate. Phosphorylation of FRS2 triggers recruitment of GRB2, GAB1, PIK3R1 and SOS1, and mediates activation of RAS, MAPK1/ERK2, MAPK3/ERK1 and the MAP kinase signaling pathway, as well as of the AKT1 signaling pathway. FGFR2 signaling is down-regulated by ubiquitination, internalization and degradation. Mutations that lead to constitutive kinase activation or impair normal FGFR2 maturation, internalization and degradation lead to aberrant signaling. Over-expressed FGFR2 promotes activation of STAT1. This Mus musculus (Mouse) protein is Fibroblast growth factor receptor 2 (Fgfr2).